We begin with the raw amino-acid sequence, 90 residues long: Bombyxin G-1 (90 aa).

The signal sequence occupies residues 1–19 (MKLIIFVVFCITIYGSTSG). Cystine bridges form between C28–C77, C40–C90, and C76–C81. Residues 49–67 (NTQYEGYHWPLLAYSEERI) constitute a propeptide, c peptide like.

The protein belongs to the insulin family. As to quaternary structure, heterodimer of a B chain and an A chain linked by two disulfide bonds.

It is found in the secreted. The protein is Bombyxin G-1 (BBXG1) of Bombyx mori (Silk moth).